The sequence spans 84 residues: uncharacterized protein (84 aa).

A helical transmembrane segment spans residues 7 to 23 (AFSGVIALYGGYLYLRL).

It is found in the membrane. This is an uncharacterized protein from Haemophilus influenzae (strain ATCC 51907 / DSM 11121 / KW20 / Rd).